The following is a 316-amino-acid chain: tRNA dimethylallyltransferase (316 aa).

ATP is bound at residue 13–20; that stretch reads GPTASGKT. Residue 15–20 participates in substrate binding; sequence TASGKT. Interaction with substrate tRNA stretches follow at residues 38–41, 162–166, 243–248, and 276–283; these read DSAL, QRINR, RCVGYR, and KRQITWLR.

This sequence belongs to the IPP transferase family. In terms of assembly, monomer. The cofactor is Mg(2+).

The enzyme catalyses adenosine(37) in tRNA + dimethylallyl diphosphate = N(6)-dimethylallyladenosine(37) in tRNA + diphosphate. Functionally, catalyzes the transfer of a dimethylallyl group onto the adenine at position 37 in tRNAs that read codons beginning with uridine, leading to the formation of N6-(dimethylallyl)adenosine (i(6)A). The chain is tRNA dimethylallyltransferase from Pasteurella multocida (strain Pm70).